The following is an 820-amino-acid chain: DNA gyrase subunit A (820 aa).

Residues 31-496 (IPDVRDGLKP…TLTNIEIEDL (466 aa)) form the Topo IIA-type catalytic domain. The O-(5'-phospho-DNA)-tyrosine intermediate role is filled by Tyr-119. The GyrA-box signature appears at 523-529 (QRRGGKG).

Belongs to the type II topoisomerase GyrA/ParC subunit family. In terms of assembly, heterotetramer, composed of two GyrA and two GyrB chains. In the heterotetramer, GyrA contains the active site tyrosine that forms a transient covalent intermediate with DNA, while GyrB binds cofactors and catalyzes ATP hydrolysis.

It is found in the cytoplasm. It carries out the reaction ATP-dependent breakage, passage and rejoining of double-stranded DNA.. Its function is as follows. A type II topoisomerase that negatively supercoils closed circular double-stranded (ds) DNA in an ATP-dependent manner to modulate DNA topology and maintain chromosomes in an underwound state. Negative supercoiling favors strand separation, and DNA replication, transcription, recombination and repair, all of which involve strand separation. Also able to catalyze the interconversion of other topological isomers of dsDNA rings, including catenanes and knotted rings. Type II topoisomerases break and join 2 DNA strands simultaneously in an ATP-dependent manner. The sequence is that of DNA gyrase subunit A from Lawsonia intracellularis (strain PHE/MN1-00).